The primary structure comprises 57 residues: Enolase (57 aa).

Glutamate 25 functions as the Proton donor in the catalytic mechanism.

This sequence belongs to the enolase family. Mg(2+) serves as cofactor.

The protein resides in the cytoplasm. The protein localises to the secreted. Its subcellular location is the cell surface. It carries out the reaction (2R)-2-phosphoglycerate = phosphoenolpyruvate + H2O. The protein operates within carbohydrate degradation; glycolysis; pyruvate from D-glyceraldehyde 3-phosphate: step 4/5. Catalyzes the reversible conversion of 2-phosphoglycerate (2-PG) into phosphoenolpyruvate (PEP). It is essential for the degradation of carbohydrates via glycolysis. The chain is Enolase from Clostridioides difficile (Peptoclostridium difficile).